Reading from the N-terminus, the 159-residue chain is Small ribosomal subunit protein uS7 (159 aa).

Belongs to the universal ribosomal protein uS7 family. Part of the 30S ribosomal subunit. Contacts proteins S9 and S11.

In terms of biological role, one of the primary rRNA binding proteins, it binds directly to 16S rRNA where it nucleates assembly of the head domain of the 30S subunit. Is located at the subunit interface close to the decoding center, probably blocks exit of the E-site tRNA. This chain is Small ribosomal subunit protein uS7, found in Elusimicrobium minutum (strain Pei191).